Reading from the N-terminus, the 172-residue chain is Immune protein Tsi1 (172 aa).

The signal sequence occupies residues 1-19; the sequence is MKLLAGSFAALFLSLSAQA. 3 disulfide bridges follow: Cys22/Cys167, Cys79/Cys121, and Cys147/Cys155.

In terms of assembly, forms a heterotetramer with Tse1 consisting of two Tse1 dimers and two Tsi1 dimers. Formation of the complex inactivates Tse1 enzymatic activity.

Functionally, immunity protein that plays a role in preventing early activation of toxin Tse1. Binds to a large surface of Tse1 and thereby occludes the active site to specifically inhibits enzyme activity by forming a hydrogen bond with the catalytic diad. This chain is Immune protein Tsi1, found in Pseudomonas aeruginosa (strain ATCC 15692 / DSM 22644 / CIP 104116 / JCM 14847 / LMG 12228 / 1C / PRS 101 / PAO1).